Here is a 324-residue protein sequence, read N- to C-terminus: CYFIP-related Rac1 interactor B (324 aa).

A lipid anchor (N-myristoyl glycine) is attached at Gly2. Lys74 is covalently cross-linked (Glycyl lysine isopeptide (Lys-Gly) (interchain with G-Cter in ubiquitin)).

It belongs to the CYRI family. Interacts with RAC1 (GTP-bound form preferentially). In terms of processing, ubiquitinated at Lys-74 upon Salmonella bacterial infection. Expressed in pancreatic ducts (at protein level).

It localises to the membrane. Its subcellular location is the mitochondrion. Its function is as follows. Negatively regulates RAC1 signaling and RAC1-driven cytoskeletal remodeling. Regulates chemotaxis, cell migration and epithelial polarization by controlling the polarity, plasticity, duration and extent of protrusions. Limits Rac1 mediated activation of the Scar/WAVE complex, focuses protrusion signals and regulates pseudopod complexity by inhibiting Scar/WAVE-induced actin polymerization. Protects against Salmonella bacterial infection. Attenuates processes such as macropinocytosis, phagocytosis and cell migration and restrict sopE-mediated bacterial entry. Also restricts infection mediated by Mycobacterium tuberculosis and Listeria monocytogenes. Involved in the regulation of mitochondrial dynamics and oxidative stress. The protein is CYFIP-related Rac1 interactor B (Cyrib) of Mus musculus (Mouse).